The chain runs to 201 residues: MEYLIGIQGPDYVLVASDRVAASNIVQMKDDHDKMFKMSEKILLLCVGEAGDTVQFAEYIQKNVQLYKMRNGYELSPTAAANFTRRNLADCLRSRTPYHVNLLLAGYDEHEGPALYYMDYLAALAKAPFAAHGYGAFLTLSILDRYYTPTISRERAVELLRKCLEELQKRFILNLPTFSVRIIDKNGIHDLDNISFPKQGS.

Position 1 is an N-acetylmethionine (M1).

Belongs to the peptidase T1B family. The 26S proteasome consists of a 20S proteasome core and two 19S regulatory subunits. The 20S proteasome core is a barrel-shaped complex made of 28 subunits that are arranged in four stacked rings. The two outer rings are each formed by seven alpha subunits, and the two inner rings are formed by seven beta subunits. The proteolytic activity is exerted by three beta-subunits PSMB5, PSMB6 and PSMB7. As to quaternary structure, (Microbial infection) Interacts with HIV-1 protein Tat.

It localises to the cytoplasm. Its subcellular location is the nucleus. Its function is as follows. Non-catalytic component of the 20S core proteasome complex involved in the proteolytic degradation of most intracellular proteins. This complex plays numerous essential roles within the cell by associating with different regulatory particles. Associated with two 19S regulatory particles, forms the 26S proteasome and thus participates in the ATP-dependent degradation of ubiquitinated proteins. The 26S proteasome plays a key role in the maintenance of protein homeostasis by removing misfolded or damaged proteins that could impair cellular functions, and by removing proteins whose functions are no longer required. Associated with the PA200 or PA28, the 20S proteasome mediates ubiquitin-independent protein degradation. This type of proteolysis is required in several pathways including spermatogenesis (20S-PA200 complex) or generation of a subset of MHC class I-presented antigenic peptides (20S-PA28 complex). The chain is Proteasome subunit beta type-2 from Homo sapiens (Human).